The sequence spans 541 residues: Chaperonin GroEL 2 (541 aa).

ATP contacts are provided by residues 30–33, Lys51, 87–91, Gly415, and Asp496; these read TLGP and DGTTT.

The protein belongs to the chaperonin (HSP60) family. In terms of assembly, forms a cylinder of 14 subunits composed of two heptameric rings stacked back-to-back. Interacts with the co-chaperonin GroES.

The protein resides in the cytoplasm. It catalyses the reaction ATP + H2O + a folded polypeptide = ADP + phosphate + an unfolded polypeptide.. In terms of biological role, together with its co-chaperonin GroES, plays an essential role in assisting protein folding. The GroEL-GroES system forms a nano-cage that allows encapsulation of the non-native substrate proteins and provides a physical environment optimized to promote and accelerate protein folding. This is Chaperonin GroEL 2 from Bradyrhizobium sp. (strain BTAi1 / ATCC BAA-1182).